The primary structure comprises 313 residues: Protoheme IX farnesyltransferase (313 aa).

Transmembrane regions (helical) follow at residues 23–43 (ILAY…VTTI), 56–76 (PLLI…ANTL), 107–127 (LIFG…TANL), 128–148 (LSGL…TLVL), 155–175 (NVVW…SAVT), 182–202 (ALVM…ALAM), 243–263 (LALA…VWFL), and 291–311 (YLAV…PTLF).

It belongs to the UbiA prenyltransferase family. Protoheme IX farnesyltransferase subfamily.

It is found in the cell membrane. The catalysed reaction is heme b + (2E,6E)-farnesyl diphosphate + H2O = Fe(II)-heme o + diphosphate. Its pathway is porphyrin-containing compound metabolism; heme O biosynthesis; heme O from protoheme: step 1/1. Functionally, converts heme B (protoheme IX) to heme O by substitution of the vinyl group on carbon 2 of heme B porphyrin ring with a hydroxyethyl farnesyl side group. The chain is Protoheme IX farnesyltransferase from Mycobacteroides abscessus (strain ATCC 19977 / DSM 44196 / CCUG 20993 / CIP 104536 / JCM 13569 / NCTC 13031 / TMC 1543 / L948) (Mycobacterium abscessus).